The following is a 231-amino-acid chain: ATP-dependent dethiobiotin synthetase BioD (231 aa).

ATP is bound at residue 13 to 18 (DVGKTV). T17 lines the Mg(2+) pocket. The active site involves K38. ATP-binding positions include D55, 116–119 (EGAG), and 176–177 (NR). Residues D55 and E116 each coordinate Mg(2+).

It belongs to the dethiobiotin synthetase family. Homodimer. It depends on Mg(2+) as a cofactor.

It is found in the cytoplasm. It carries out the reaction (7R,8S)-7,8-diammoniononanoate + CO2 + ATP = (4R,5S)-dethiobiotin + ADP + phosphate + 3 H(+). The protein operates within cofactor biosynthesis; biotin biosynthesis; biotin from 7,8-diaminononanoate: step 1/2. Functionally, catalyzes a mechanistically unusual reaction, the ATP-dependent insertion of CO2 between the N7 and N8 nitrogen atoms of 7,8-diaminopelargonic acid (DAPA, also called 7,8-diammoniononanoate) to form a ureido ring. The protein is ATP-dependent dethiobiotin synthetase BioD of Vibrio cholerae serotype O1 (strain ATCC 39315 / El Tor Inaba N16961).